A 239-amino-acid polypeptide reads, in one-letter code: MIINAKGPASFAEKYIVRSIWENKFPPGSILPAERELSELIGVTRTTLREVLQRLARDGWLTIQHGKPTRVNNFWETSGLNILETIAELNPDGFPELVDQLLSARSSVSAIYFRGAIRNSPDEAVVALANINELEDTAQAYADFDYALQHTLAFSSGNPLYVLILNGFKGLYSRVGRYYFSSAEARALAMDFYKQLQQLAIDKNYTDVPALMRTYGINSGVMWQSLRDDMPVELGHSDT.

An HTH gntR-type domain is found at 6 to 74 (KGPASFAEKY…HGKPTRVNNF (69 aa)). The H-T-H motif DNA-binding region spans 34–53 (ERELSELIGVTRTTLREVLQ).

Homodimer.

The protein resides in the cytoplasm. Functionally, multifunctional regulator of fatty acid metabolism. This Shewanella halifaxensis (strain HAW-EB4) protein is Fatty acid metabolism regulator protein.